An 89-amino-acid chain; its full sequence is Small ribosomal subunit protein uS14A (89 aa).

The protein belongs to the universal ribosomal protein uS14 family. As to quaternary structure, part of the 30S ribosomal subunit. Contacts proteins S3 and S10.

Functionally, binds 16S rRNA, required for the assembly of 30S particles and may also be responsible for determining the conformation of the 16S rRNA at the A site. The polypeptide is Small ribosomal subunit protein uS14A (Pediococcus pentosaceus (strain ATCC 25745 / CCUG 21536 / LMG 10740 / 183-1w)).